A 1093-amino-acid polypeptide reads, in one-letter code: TATA element modulatory factor (1093 aa).

Disordered regions lie at residues 38-80 (WAET…SPKA) and 108-189 (TIQK…DMKV). Residues 51–70 (SPVSGGWDTSTWGLKSNTEP) show a composition bias toward polar residues. Phosphoserine occurs at positions 72, 77, 112, and 136. Over residues 123-137 (QRPEEEVKSSLHESL) the composition is skewed to basic and acidic residues. A compositionally biased stretch (polar residues) spans 139 to 158 (IGQSRTPETTESQVKDSSLC). Positions 173–187 (TEGKHEETVNKESDM) are enriched in basic and acidic residues. 2 positions are modified to phosphoserine: serine 199 and serine 217. Positions 229–238 (PKEQKHEDRQ) are enriched in basic and acidic residues. Disordered regions lie at residues 229–260 (PKEQ…SDIE) and 266–285 (SVIS…SKSS). A compositionally biased stretch (low complexity) spans 246–257 (VSTFSSGTSTTS). A phosphoserine mark is found at serine 328, serine 330, serine 333, serine 338, serine 344, serine 413, serine 542, serine 925, and serine 928. Positions 333-342 (SLDSRSVSEI) are interaction with Elongin BC complex. The stretch at 439-922 (EALSEKEDVC…QETIKEKERK (484 aa)) forms a coiled coil. The interval 919–939 (KERKPFSVSSTPTMSRSSSIS) is disordered. Positions 925 to 939 (SVSSTPTMSRSSSIS) are enriched in low complexity. Threonine 929 carries the post-translational modification Phosphothreonine. Position 933 is a phosphoserine (serine 933). Positions 984 to 1092 (SIIENLQSQL…QIDELLRQSL (109 aa)) form a coiled coil.

Interacts with TRNP1; may regulate TRNP1 proteasomal degradation. Component of the SNF/SWI transcription factor complexes. Interacts with RAB6A. Interacts with STAT3 and FER. Interacts with TCEB1. Post-translationally, phosphorylated by FER.

It localises to the cytoplasm. It is found in the nucleus. Its subcellular location is the golgi apparatus membrane. Functionally, potential coactivator of the androgen receptor. Mediates STAT3 degradation. May play critical roles in two RAB6-dependent retrograde transport processes: one from endosomes to the Golgi and the other from the Golgi to the ER. This protein binds the HIV-1 TATA element and inhibits transcriptional activation by the TATA-binding protein (TBP). The chain is TATA element modulatory factor (TMF1) from Homo sapiens (Human).